The primary structure comprises 623 residues: MAU2 chromatid cohesion factor homolog (623 aa).

TPR repeat units follow at residues Phe96–Asn129, Gly451–Glu484, and Ser491–Ile524.

This sequence belongs to the SCC4/mau-2 family. Interacts with Nipped-B to form the cohesin loading complex.

Its subcellular location is the nucleus. The protein resides in the nucleoplasm. Required for association of the cohesin complex with chromatin during interphase. Plays a role in sister chromatid cohesion and normal progression through prometaphase. This Drosophila grimshawi (Hawaiian fruit fly) protein is MAU2 chromatid cohesion factor homolog.